Reading from the N-terminus, the 278-residue chain is 4-hydroxy-3-methylbut-2-enyl diphosphate reductase (278 aa).

C12 contributes to the [4Fe-4S] cluster binding site. (2E)-4-hydroxy-3-methylbut-2-enyl diphosphate contacts are provided by H36 and H70. Dimethylallyl diphosphate contacts are provided by H36 and H70. Residues H36 and H70 each coordinate isopentenyl diphosphate. C92 contacts [4Fe-4S] cluster. H120 provides a ligand contact to (2E)-4-hydroxy-3-methylbut-2-enyl diphosphate. H120 lines the dimethylallyl diphosphate pocket. H120 lines the isopentenyl diphosphate pocket. E122 functions as the Proton donor in the catalytic mechanism. A (2E)-4-hydroxy-3-methylbut-2-enyl diphosphate-binding site is contributed by T158. Residue C186 coordinates [4Fe-4S] cluster. The (2E)-4-hydroxy-3-methylbut-2-enyl diphosphate site is built by S214, N216, and S258. Residues S214, N216, and S258 each contribute to the dimethylallyl diphosphate site. The isopentenyl diphosphate site is built by S214, N216, and S258.

This sequence belongs to the IspH family. [4Fe-4S] cluster serves as cofactor.

It carries out the reaction isopentenyl diphosphate + 2 oxidized [2Fe-2S]-[ferredoxin] + H2O = (2E)-4-hydroxy-3-methylbut-2-enyl diphosphate + 2 reduced [2Fe-2S]-[ferredoxin] + 2 H(+). The enzyme catalyses dimethylallyl diphosphate + 2 oxidized [2Fe-2S]-[ferredoxin] + H2O = (2E)-4-hydroxy-3-methylbut-2-enyl diphosphate + 2 reduced [2Fe-2S]-[ferredoxin] + 2 H(+). It functions in the pathway isoprenoid biosynthesis; dimethylallyl diphosphate biosynthesis; dimethylallyl diphosphate from (2E)-4-hydroxy-3-methylbutenyl diphosphate: step 1/1. It participates in isoprenoid biosynthesis; isopentenyl diphosphate biosynthesis via DXP pathway; isopentenyl diphosphate from 1-deoxy-D-xylulose 5-phosphate: step 6/6. Catalyzes the conversion of 1-hydroxy-2-methyl-2-(E)-butenyl 4-diphosphate (HMBPP) into a mixture of isopentenyl diphosphate (IPP) and dimethylallyl diphosphate (DMAPP). Acts in the terminal step of the DOXP/MEP pathway for isoprenoid precursor biosynthesis. The polypeptide is 4-hydroxy-3-methylbut-2-enyl diphosphate reductase (Campylobacter lari (strain RM2100 / D67 / ATCC BAA-1060)).